A 360-amino-acid polypeptide reads, in one-letter code: Phospho-N-acetylmuramoyl-pentapeptide-transferase (360 aa).

10 helical membrane passes run 18–38 (VFSY…FISL), 73–93 (TMGG…WADL), 94–114 (SNIY…VGFV), 134–154 (YFWQ…IAQG), 168–188 (LLPQ…VGTS), 199–219 (GLAI…AYVT), 239–259 (LVIV…FNTY), 263–283 (VFMG…IAIL), 288–308 (LVLF…ILQV), and 338–358 (VIVR…ATLK).

Belongs to the glycosyltransferase 4 family. MraY subfamily. The cofactor is Mg(2+).

It localises to the cell inner membrane. The catalysed reaction is UDP-N-acetyl-alpha-D-muramoyl-L-alanyl-gamma-D-glutamyl-meso-2,6-diaminopimeloyl-D-alanyl-D-alanine + di-trans,octa-cis-undecaprenyl phosphate = di-trans,octa-cis-undecaprenyl diphospho-N-acetyl-alpha-D-muramoyl-L-alanyl-D-glutamyl-meso-2,6-diaminopimeloyl-D-alanyl-D-alanine + UMP. It functions in the pathway cell wall biogenesis; peptidoglycan biosynthesis. In terms of biological role, catalyzes the initial step of the lipid cycle reactions in the biosynthesis of the cell wall peptidoglycan: transfers peptidoglycan precursor phospho-MurNAc-pentapeptide from UDP-MurNAc-pentapeptide onto the lipid carrier undecaprenyl phosphate, yielding undecaprenyl-pyrophosphoryl-MurNAc-pentapeptide, known as lipid I. The chain is Phospho-N-acetylmuramoyl-pentapeptide-transferase from Colwellia psychrerythraea (strain 34H / ATCC BAA-681) (Vibrio psychroerythus).